The chain runs to 175 residues: Small ribosomal subunit protein uS5 (175 aa).

The S5 DRBM domain occupies 11 to 74 (LSEVLVDVNR…QAAKKRMMKV (64 aa)).

This sequence belongs to the universal ribosomal protein uS5 family. As to quaternary structure, part of the 30S ribosomal subunit. Contacts proteins S4 and S8.

With S4 and S12 plays an important role in translational accuracy. In terms of biological role, located at the back of the 30S subunit body where it stabilizes the conformation of the head with respect to the body. The chain is Small ribosomal subunit protein uS5 from Rickettsia typhi (strain ATCC VR-144 / Wilmington).